Consider the following 427-residue polypeptide: 3-phosphoshikimate 1-carboxyvinyltransferase (427 aa).

Residues Lys-22, Ser-23, and Arg-27 each coordinate 3-phosphoshikimate. Position 22 (Lys-22) interacts with phosphoenolpyruvate. Positions 96 and 124 each coordinate phosphoenolpyruvate. Ser-169, Ser-170, Gln-171, Ser-197, Asp-313, Asn-336, and Lys-340 together coordinate 3-phosphoshikimate. Gln-171 is a phosphoenolpyruvate binding site. Asp-313 (proton acceptor) is an active-site residue. 3 residues coordinate phosphoenolpyruvate: Arg-344, Arg-386, and Lys-411.

The protein belongs to the EPSP synthase family. Monomer.

The protein localises to the cytoplasm. It catalyses the reaction 3-phosphoshikimate + phosphoenolpyruvate = 5-O-(1-carboxyvinyl)-3-phosphoshikimate + phosphate. It participates in metabolic intermediate biosynthesis; chorismate biosynthesis; chorismate from D-erythrose 4-phosphate and phosphoenolpyruvate: step 6/7. Functionally, catalyzes the transfer of the enolpyruvyl moiety of phosphoenolpyruvate (PEP) to the 5-hydroxyl of shikimate-3-phosphate (S3P) to produce enolpyruvyl shikimate-3-phosphate and inorganic phosphate. The protein is 3-phosphoshikimate 1-carboxyvinyltransferase of Escherichia coli O6:H1 (strain CFT073 / ATCC 700928 / UPEC).